We begin with the raw amino-acid sequence, 224 residues long: MDLKNKSAVILLSGGLDSSTVTGLAKASKAKIFGLSFDYGQRHKKELDSAFTIANHFEIEEFKIVKLDLSLWGGSSLTDIKKDLPIDGIQQNTIPNTYVPGRNTIFISVALSYAEAINADLIGLGVNALDYSGYPDCRPDYIKKFQELANLANKRGREENPIKLWTPLLDLNKEDIIQLAFDNNVPLEKTWSCYSGNLEPCGKCDSCRIRQTAYKKWQIKKNEN.

12 to 22 serves as a coordination point for ATP; the sequence is LSGGLDSSTVT. Positions 193, 201, 204, and 207 each coordinate Zn(2+).

The protein belongs to the QueC family. Zn(2+) serves as cofactor.

It carries out the reaction 7-carboxy-7-deazaguanine + NH4(+) + ATP = 7-cyano-7-deazaguanine + ADP + phosphate + H2O + H(+). The protein operates within purine metabolism; 7-cyano-7-deazaguanine biosynthesis. Functionally, catalyzes the ATP-dependent conversion of 7-carboxy-7-deazaguanine (CDG) to 7-cyano-7-deazaguanine (preQ(0)). This is 7-cyano-7-deazaguanine synthase from Prochlorococcus marinus subsp. pastoris (strain CCMP1986 / NIES-2087 / MED4).